Here is a 481-residue protein sequence, read N- to C-terminus: Flavonol 3-O-glucosyltransferase UGT71C1 (481 aa).

The Proton acceptor role is filled by histidine 19. An anthocyanidin is bound at residue histidine 19. Catalysis depends on aspartate 131, which acts as the Charge relay. Threonine 153, alanine 352, glutamine 354, histidine 369, tryptophan 372, asparagine 373, serine 374, and glutamate 377 together coordinate UDP-alpha-D-glucose. Residue alanine 392 participates in an anthocyanidin binding. Residues glutamate 393 and glutamine 394 each coordinate UDP-alpha-D-glucose.

Belongs to the UDP-glycosyltransferase family.

The catalysed reaction is a flavonol + UDP-alpha-D-glucose = a flavonol 3-O-beta-D-glucoside + UDP + H(+). It carries out the reaction a 7-O-hydroxy-flavonol + UDP-alpha-D-glucose = a flavonol 7-O-beta-D-glucoside + UDP + H(+). Its function is as follows. Possesses quercetin 7-O-glucosyltransferase and 3'-O-glucosyltransferase activities in vitro. Also active in vitro on benzoates and benzoate derivatives. Glucosylates other secondary metabolites in vitro like trans-resveratrol, curcumin, vanillin and etoposide. This Arabidopsis thaliana (Mouse-ear cress) protein is Flavonol 3-O-glucosyltransferase UGT71C1.